Here is a 72-residue protein sequence, read N- to C-terminus: Penaeidin-2d (72 aa).

The signal sequence occupies residues methionine 1–alanine 21. Glutamine 22 carries the post-translational modification Pyrrolidone carboxylic acid. 3 disulfide bridges follow: cysteine 45-cysteine 59, cysteine 48-cysteine 66, and cysteine 60-cysteine 67. A Lysine amide modification is found at lysine 71.

This sequence belongs to the penaeidin family.

The protein resides in the cytoplasmic granule. Antibacterial and antifungal activity. Presents chitin-binding activity. This is Penaeidin-2d from Penaeus setiferus (Atlantic white shrimp).